The primary structure comprises 57 residues: Alpha-conotoxin-like Sm1.2 (57 aa).

Residues 1–16 (MFTVFLLVVLATTVVS) form the signal peptide. The propeptide occupies 17–42 (FPSDRESDGANDEARTDEPEEHGPDR). The interval 17-46 (FPSDRESDGANDEARTDEPEEHGPDRNGCC) is disordered. Residues 19–41 (SDRESDGANDEARTDEPEEHGPD) show a composition bias toward basic and acidic residues. Disulfide bonds link C45–C51 and C46–C56. A Cysteine amide modification is found at C56.

Belongs to the conotoxin A superfamily. Expressed by the venom duct.

It is found in the secreted. Alpha-conotoxins act on postsynaptic membranes, they bind to the nicotinic acetylcholine receptors (nAChR) and thus inhibit them. The polypeptide is Alpha-conotoxin-like Sm1.2 (Conus stercusmuscarum (Fly-specked cone)).